Here is a 145-residue protein sequence, read N- to C-terminus: Small ribosomal subunit protein bS6 (145 aa).

The segment covering Glu113–Glu132 has biased composition (basic and acidic residues). The disordered stretch occupies residues Glu113–Glu145. Residues Glu133–Glu145 show a composition bias toward acidic residues.

It belongs to the bacterial ribosomal protein bS6 family.

Binds together with bS18 to 16S ribosomal RNA. In Campylobacter hominis (strain ATCC BAA-381 / DSM 21671 / CCUG 45161 / LMG 19568 / NCTC 13146 / CH001A), this protein is Small ribosomal subunit protein bS6.